Consider the following 189-residue polypeptide: Peptidyl-tRNA hydrolase (189 aa).

Tyr15 is a binding site for tRNA. Residue His20 is the Proton acceptor of the active site. TRNA contacts are provided by Phe66, Asn68, and Asn114.

This sequence belongs to the PTH family. In terms of assembly, monomer.

The protein resides in the cytoplasm. The catalysed reaction is an N-acyl-L-alpha-aminoacyl-tRNA + H2O = an N-acyl-L-amino acid + a tRNA + H(+). Its function is as follows. Hydrolyzes ribosome-free peptidyl-tRNAs (with 1 or more amino acids incorporated), which drop off the ribosome during protein synthesis, or as a result of ribosome stalling. Functionally, catalyzes the release of premature peptidyl moieties from peptidyl-tRNA molecules trapped in stalled 50S ribosomal subunits, and thus maintains levels of free tRNAs and 50S ribosomes. The chain is Peptidyl-tRNA hydrolase from Streptococcus equi subsp. zooepidemicus (strain H70).